Reading from the N-terminus, the 197-residue chain is Histone chaperone asf1b-B (197 aa).

The protein belongs to the ASF1 family. As to quaternary structure, interacts with histone H3 and histone H4.

Its subcellular location is the nucleus. Functionally, histone chaperone that facilitates histone deposition and histone exchange and removal during nucleosome assembly and disassembly. The sequence is that of Histone chaperone asf1b-B (asf1bb) from Danio rerio (Zebrafish).